The following is a 390-amino-acid chain: MAAPCVSCGRVLSLWFTPAVRASLCQRPGYWTASAVGWQTGTRFQLSKLIHTTVVTTKKNVQASRQESYTEDFIKKQIEEFNIGKRHLANMMGEDPETFAEEDIDRAIAYLFPSGLFEKRARPMMKHPEHIFPKQRATQWGEDGRPFHFLFYTGKQSYYSLMHDVYGKVMQLEKHRGPLSASAESRDLIGSRWLIKEELEEMLVEKLSDEDYAQFIRLLEKLLTLPCGPAEEEFVQRFRRSVTIQSKKQLIEPVQYDEQGMAFSTSEGRRKSATAQAVVYEHGSGKIHVNGVDYLIYFPITQDREQLMFPFHFLDRLERHDVTCTVSGGGRSAQAGAIRLAMARALCSFVTEDEVEWMRQAGLLTPDPRIRERKKPGQEGARRKFTWKKR.

The disordered stretch occupies residues 368–390 (PRIRERKKPGQEGARRKFTWKKR).

Belongs to the universal ribosomal protein uS9 family. Component of the mitochondrial ribosome small subunit (28S) which comprises a 12S rRNA and about 30 distinct proteins.

It localises to the mitochondrion. The chain is Small ribosomal subunit protein uS9m (Mrps9) from Mus musculus (Mouse).